We begin with the raw amino-acid sequence, 751 residues long: Kelch-like protein 1 (751 aa).

Composition is skewed to low complexity over residues 25-36 (PSPASSSPAGGS) and 74-90 (SSSS…ASSS). Disordered stretches follow at residues 25-54 (PSPA…GPSQ), 69-98 (FWKK…LNGT), and 157-184 (SSIQ…SDLD). The segment covering 170–184 (LTSTNHSLTPQSDLD) has biased composition (polar residues). The BTB domain occupies 215–282 (CDVILIVGNR…AYTGCLELKE (68 aa)). Kelch repeat units lie at residues 463–509 (TLYA…VIDD), 510–556 (KLFV…VLEG), 558–603 (IYAV…ALNG), 604–650 (KLYS…TCDG), 652–703 (LYAV…LLGD), and 704–750 (RLYA…VIKQ).

In terms of tissue distribution, highly expressed in brain.

The protein localises to the cytoplasm. The protein resides in the cytoskeleton. Functionally, may play a role in organizing the actin cytoskeleton of the brain cells. This chain is Kelch-like protein 1 (Klhl1), found in Mus musculus (Mouse).